The chain runs to 29 residues: Beta-theraphotoxin-Gr1a (29 aa).

3 cysteine pairs are disulfide-bonded: Cys2–Cys16, Cys9–Cys21, and Cys15–Cys25.

This sequence belongs to the neurotoxin 30 (phrixotoxin) family. Expressed by the venom gland.

It localises to the secreted. Functionally, inhibits voltage-gated sodium channels Nav1.1/SCN1A (IC(50)=630 nM), Nav1.2/SCN2A (IC(50)=230 nM), Nav1.3/SCN3A (IC(50)=770 nM), Nav1.4/SCN4A (IC(50)=1290 nM), Nav1.6/SCN8A (IC(50)=630 nM), Nav1.7/SCN9A (IC(50)=15.3-1000 nM) and potassium channels Kv11.1/KCNH2 (IC(50)=4.2 uM). This is Beta-theraphotoxin-Gr1a from Grammostola rosea (Chilean rose tarantula).